The sequence spans 320 residues: Foldase protein PrsA (320 aa).

Positions 1–20 are cleaved as a signal peptide; sequence MKMINKLIVPVTASALLLGA. Residue Cys21 is the site of N-palmitoyl cysteine attachment. Cys21 is lipidated: S-diacylglycerol cysteine. Residues 139–245 enclose the PpiC domain; it reads EDSKKASHIL…FGYHIIKADK (107 aa). The disordered stretch occupies residues 159–198; sequence EGLDDKEAKQKAEEIQKEVSKDPSKFGEIAKKESMDTGSA.

Belongs to the PrsA family.

It localises to the cell membrane. The catalysed reaction is [protein]-peptidylproline (omega=180) = [protein]-peptidylproline (omega=0). Plays a major role in protein secretion by helping the post-translocational extracellular folding of several secreted proteins. This chain is Foldase protein PrsA, found in Staphylococcus aureus (strain Mu3 / ATCC 700698).